Consider the following 260-residue polypeptide: Pyridoxine 5'-phosphate synthase (260 aa).

3-amino-2-oxopropyl phosphate-binding residues include asparagine 10 and arginine 21. The active-site Proton acceptor is histidine 46. 2 residues coordinate 1-deoxy-D-xylulose 5-phosphate: arginine 48 and histidine 53. Glutamate 76 acts as the Proton acceptor in catalysis. Position 113 (threonine 113) interacts with 1-deoxy-D-xylulose 5-phosphate. Residue histidine 204 is the Proton donor of the active site. Residues aspartate 205 and 227–228 (GH) each bind 3-amino-2-oxopropyl phosphate.

It belongs to the PNP synthase family. In terms of assembly, homooctamer; tetramer of dimers.

The protein resides in the cytoplasm. It carries out the reaction 3-amino-2-oxopropyl phosphate + 1-deoxy-D-xylulose 5-phosphate = pyridoxine 5'-phosphate + phosphate + 2 H2O + H(+). It participates in cofactor biosynthesis; pyridoxine 5'-phosphate biosynthesis; pyridoxine 5'-phosphate from D-erythrose 4-phosphate: step 5/5. Its function is as follows. Catalyzes the complicated ring closure reaction between the two acyclic compounds 1-deoxy-D-xylulose-5-phosphate (DXP) and 3-amino-2-oxopropyl phosphate (1-amino-acetone-3-phosphate or AAP) to form pyridoxine 5'-phosphate (PNP) and inorganic phosphate. This chain is Pyridoxine 5'-phosphate synthase, found in Xylella fastidiosa (strain M12).